The following is a 512-amino-acid chain: Putative B3 domain-containing protein REM4 (512 aa).

Positions 11-103 (NKAFFIIDLS…VFHVSPFGRS (93 aa)) form a DNA-binding region, TF-B3 1. The disordered stretch occupies residues 111-145 (SSSTSDDDDDERTVFDDDEDDDVGDDDDNSISEDD). Positions 115–145 (SDDDDDERTVFDDDEDDDVGDDDDNSISEDD) are enriched in acidic residues. 2 DNA-binding regions (TF-B3) span residues 169–265 (YLVA…LCPN) and 307–403 (ILTF…CSKV). The tract at residues 408-465 (SSDGHKTADRKPRMTDQAPLAEEQTDNRVEKRAQVTEEGGPSRSTRADPGNLQQKQPC) is disordered. Composition is skewed to basic and acidic residues over residues 410–421 (DGHKTADRKPRM) and 432–442 (TDNRVEKRAQV).

It localises to the nucleus. The protein is Putative B3 domain-containing protein REM4 (REM4) of Arabidopsis thaliana (Mouse-ear cress).